Reading from the N-terminus, the 466-residue chain is Ferrochelatase-1, chloroplastic/mitochondrial (466 aa).

The segment covering 1–11 (MQATALSSGFN) has biased composition (polar residues). Positions 1-23 (MQATALSSGFNPLTKRKDHRFPR) are disordered. The N-terminal 35 residues, 1 to 35 (MQATALSSGFNPLTKRKDHRFPRSCSQRNSLSLIQ), are a transit peptide targeting the chloroplast and mitochondrion.

Belongs to the ferrochelatase family. As to expression, expressed in roots, leaves, stems and flowers. Present in both leaves and roots.

The protein resides in the plastid. The protein localises to the chloroplast membrane. It is found in the chloroplast thylakoid membrane. Its subcellular location is the mitochondrion. The enzyme catalyses heme b + 2 H(+) = protoporphyrin IX + Fe(2+). Its pathway is porphyrin-containing compound metabolism; protoheme biosynthesis; protoheme from protoporphyrin-IX: step 1/1. In terms of biological role, catalyzes the last step of heme biosynthesis by inserting ferrous iron into protoporphyrin IX to produce protoheme. Produces heme for photosynthetic cytochromes, but does not seem to be involved in stress responses. May be involved in wound-induced supply of heme to defensive hemoproteins outside plastids. Regulates the expression of photosynthesis-associated nuclear genes in undeveloped chloroplasts through production of heme. This is Ferrochelatase-1, chloroplastic/mitochondrial from Arabidopsis thaliana (Mouse-ear cress).